The sequence spans 256 residues: Hydroxyacylglutathione hydrolase (256 aa).

Positions 56, 58, 60, 61, 114, 133, and 171 each coordinate Zn(2+).

The protein belongs to the metallo-beta-lactamase superfamily. Glyoxalase II family. As to quaternary structure, monomer. The cofactor is Zn(2+).

The enzyme catalyses an S-(2-hydroxyacyl)glutathione + H2O = a 2-hydroxy carboxylate + glutathione + H(+). The protein operates within secondary metabolite metabolism; methylglyoxal degradation; (R)-lactate from methylglyoxal: step 2/2. In terms of biological role, thiolesterase that catalyzes the hydrolysis of S-D-lactoyl-glutathione to form glutathione and D-lactic acid. The polypeptide is Hydroxyacylglutathione hydrolase (Rhodobacter capsulatus (Rhodopseudomonas capsulata)).